The following is a 389-amino-acid chain: Exodeoxyribonuclease 7 large subunit (389 aa).

It belongs to the XseA family. Heterooligomer composed of large and small subunits.

Its subcellular location is the cytoplasm. It catalyses the reaction Exonucleolytic cleavage in either 5'- to 3'- or 3'- to 5'-direction to yield nucleoside 5'-phosphates.. Bidirectionally degrades single-stranded DNA into large acid-insoluble oligonucleotides, which are then degraded further into small acid-soluble oligonucleotides. The sequence is that of Exodeoxyribonuclease 7 large subunit from Pseudothermotoga lettingae (strain ATCC BAA-301 / DSM 14385 / NBRC 107922 / TMO) (Thermotoga lettingae).